The chain runs to 366 residues: IgG receptor FcRn large subunit p51 (366 aa).

A signal peptide spans 1–22; the sequence is MGMSQPGVLLSLLLVLLPQTWG. Positions 23–111 are alpha-1; that stretch reads AEPRLPLMYH…RTLENQINGT (89 aa). At 23–298 the chain is on the extracellular side; the sequence is AEPRLPLMYH…VDLDSPARSS (276 aa). Residues Asn-109, Asn-126, Asn-150, and Asn-247 are each glycosylated (N-linked (GlcNAc...) asparagine). The interval 112–201 is alpha-2; sequence FTLQGLLGCE…ERGRQNLEWK (90 aa). Disulfide bonds link Cys-120–Cys-183 and Cys-222–Cys-276. Residues 202–291 form an alpha-3 region; that stretch reads EPPSMRLKAR…GLAQPLTVDL (90 aa). The 88-residue stretch at 203–290 folds into the Ig-like C1-type domain; that stretch reads PPSMRLKARP…EGLAQPLTVD (88 aa). The tract at residues 293–298 is connecting peptide; sequence SPARSS. The helical transmembrane segment at 299 to 322 threads the bilayer; that stretch reads VPVVGIILGLLLVVVAIAGGVLLW. Over 323 to 366 the chain is Cytoplasmic; sequence NRMRSGLPAPWLSLSGDDSGDLLPGGNLPPEAEPQGVNAFPATS. Ser-335 carries the phosphoserine modification. The segment at 344-366 is disordered; the sequence is LLPGGNLPPEAEPQGVNAFPATS.

The protein belongs to the immunoglobulin superfamily. As to quaternary structure, fcRn complex consists of two subunits: p51, and p14 which is equivalent to beta-2-microglobulin. It forms an MHC class I-like heterodimer. Interacts with albumin/ALB; this interaction regulates ALB homeostasis. In terms of tissue distribution, intestinal epithelium.

The protein localises to the cell membrane. Its subcellular location is the endosome membrane. In terms of biological role, cell surface receptor that transfers passive humoral immunity from the mother to the newborn. Binds to the Fc region of monomeric immunoglobulin gamma and mediates its selective uptake from milk. IgG in the milk is bound at the apical surface of the intestinal epithelium. The resultant FcRn-IgG complexes are transcytosed across the intestinal epithelium and IgG is released from FcRn into blood or tissue fluids. Throughout life, contributes to effective humoral immunity by recycling IgG and extending its half-life in the circulation. Mechanistically, monomeric IgG binding to FcRn in acidic endosomes of endothelial and hematopoietic cells recycles IgG to the cell surface where it is released into the circulation. In addition of IgG, regulates homeostasis of the other most abundant circulating protein albumin/ALB. In Rattus norvegicus (Rat), this protein is IgG receptor FcRn large subunit p51 (Fcgrt).